The chain runs to 309 residues: MSNNMIRLATRQSPLALWQAHYVKTGLEFFHPDLKVILLPMVTQGDNILGTALSKTGGKGLFVKELERAVLDNRADIAVHSIKDMPLYFPEGLGLVAVCEREDPRDAFLSLRYHDVAQLPEGSVVGTSSLRRQCQLYKNYPGIVVRDLRGNVGARLKKLDQGDYDAIVLAVAGLKRLGLENRMTQILRPETSLPAAGQGAIGIECRLDDTVTLQRVATLNHRPSQLKISCERALLKRLEGGCQTPIGSYAEIENDELWLRAFVGAPDGQLIIDGERRGNFDSAEKIGFELANELLSRGAEAILAQLNRQ.

C242 bears the S-(dipyrrolylmethanemethyl)cysteine mark.

This sequence belongs to the HMBS family. Monomer. Dipyrromethane is required as a cofactor.

It carries out the reaction 4 porphobilinogen + H2O = hydroxymethylbilane + 4 NH4(+). It participates in porphyrin-containing compound metabolism; protoporphyrin-IX biosynthesis; coproporphyrinogen-III from 5-aminolevulinate: step 2/4. Tetrapolymerization of the monopyrrole PBG into the hydroxymethylbilane pre-uroporphyrinogen in several discrete steps. This is Porphobilinogen deaminase from Hamiltonella defensa subsp. Acyrthosiphon pisum (strain 5AT).